The following is a 425-amino-acid chain: MFVDVARIYVKGGDGGRGSNSVRREKYVPQGGPWGGDGGRGGDVVFVVDPGLNTLVDFKYQKHFKAERGEHGGPKGMHGRKGEDLVIKVPPGTVVKDDDTGEVLFDLVEPGQRAVVARGGRGGRGNMRFATPTNKCPTFYEKGEPGEERWLLLELKVVADVGLVGFPNAGKSTFLSAVSAARPKIANYPFTTLTPVLGVVDLGEGRSFVIADIPGLIEGAHQGVGLGHEFLRHVERTKVLIHVLDGAGTEGRDPLSDFDVIHNELRAYNPELAARPTLVAFNKMDLPDARENLPRVREALEKRGYRVFPISGATREGFRPLLEAAYDLIRQWVPPEPAAPEAEMVYRPKEEGWRIYKYGGVWHVEGKEIERLVAMTMWENDEAVARFLRILRLKGVEQALREAGAEDGDTVRVCDIEFELMADPV.

In terms of domain architecture, Obg spans 1 to 158 (MFVDVARIYV…RWLLLELKVV (158 aa)). One can recognise an OBG-type G domain in the interval 159–330 (ADVGLVGFPN…LLEAAYDLIR (172 aa)). Residues 165–172 (GFPNAGKS), 190–194 (FTTLT), 212–215 (DIPG), 282–285 (NKMD), and 311–313 (SGA) each bind GTP. Mg(2+) contacts are provided by Ser-172 and Thr-192. Residues 345 to 422 (VYRPKEEGWR…VCDIEFELMA (78 aa)) form the OCT domain.

Belongs to the TRAFAC class OBG-HflX-like GTPase superfamily. OBG GTPase family. In terms of assembly, monomer. Mg(2+) is required as a cofactor.

The protein resides in the cytoplasm. Functionally, an essential GTPase which binds GTP, GDP and possibly (p)ppGpp with moderate affinity, with high nucleotide exchange rates and a fairly low GTP hydrolysis rate. Plays a role in control of the cell cycle, stress response, ribosome biogenesis and in those bacteria that undergo differentiation, in morphogenesis control. This Symbiobacterium thermophilum (strain DSM 24528 / JCM 14929 / IAM 14863 / T) protein is GTPase Obg.